Reading from the N-terminus, the 137-residue chain is MPNFAGTWKMRSSENFDELLKALGVNAMLRKVAVAAASKPHVEIRQDGDQFYIKTSTTVRTTEINFKVGEGFEEETVDGRKCRSLPTWENENKIHCTQTLLEGDGPKTYWTRELANDELILTFGADDVVCTRIYVRE.

The Nuclear localization signal motif lies at 21-31; that stretch reads KALGVNAMLRK. Residue 132 to 134 coordinates all-trans-retinoate; it reads RIY.

Belongs to the calycin superfamily. Fatty-acid binding protein (FABP) family.

The protein resides in the cytoplasm. Cytosolic CRABPs may regulate the access of retinoic acid to the nuclear retinoic acid receptors. This chain is Cellular retinoic acid-binding protein 1 (Crabp1), found in Mus musculus (Mouse).